The primary structure comprises 78 residues: Large ribosomal subunit protein bL28 (78 aa).

The interval 1–20 (MSRVCQVTGKRPVTGNNRSH) is disordered.

It belongs to the bacterial ribosomal protein bL28 family.

The sequence is that of Large ribosomal subunit protein bL28 from Vibrio campbellii (strain ATCC BAA-1116).